The sequence spans 269 residues: Eukaryotic translation initiation factor 3 subunit G (269 aa).

The disordered stretch occupies residues 140-181 (AIGGGDMSAQGGSGSGRYVPPSLRAGARDPSSNAYQDQRERD). The segment covering 141 to 154 (IGGGDMSAQGGSGS) has biased composition (gly residues). At Ser-161 the chain carries Phosphoserine. In terms of domain architecture, RRM spans 184 to 263 (KTIRLTQVNE…FMLHAEWSKP (80 aa)).

This sequence belongs to the eIF-3 subunit G family. Component of the eukaryotic translation initiation factor 3 (eIF-3) complex.

It localises to the cytoplasm. In terms of biological role, RNA-binding component of the eukaryotic translation initiation factor 3 (eIF-3) complex, which is involved in protein synthesis of a specialized repertoire of mRNAs and, together with other initiation factors, stimulates binding of mRNA and methionyl-tRNAi to the 40S ribosome. The eIF-3 complex specifically targets and initiates translation of a subset of mRNAs involved in cell proliferation. This subunit can bind 18S rRNA. The polypeptide is Eukaryotic translation initiation factor 3 subunit G (Kluyveromyces lactis (strain ATCC 8585 / CBS 2359 / DSM 70799 / NBRC 1267 / NRRL Y-1140 / WM37) (Yeast)).